The sequence spans 485 residues: MVDFATRVAKSFKDKVSGIDNKKGTDIQGVLGLDSTPNVLFASVFAAGGGSYDNFFYKVENGRADFRNFANKGTSYKNLEKVYNDYKNLIGSNGLFASKDGSYSSNFEKFHQLAFYVGSSSGYNYAFADETAKRLKFGDSAIEYPNDTLEIKAPTNNSQSGDGNGGTNNDNLLGTFDIREKSNGKKGESNGKQGNGQDKKTISLYKDSIPKEKTEGTDAILISDNQLINQLQTAAKTSSSQNKANTAAITFKQSNKSETDQSTTSQVIGYTTTASLKADKKNIFDVKKLNNEKSERKIIVGATVETLNQANTLQANEAIIKPAPGKYQSTDSHKVMITQGPNIVGIHANEKEDKETQKFINWYLNKEESWSVQNSGSTTTKKQTAAQYFAEQSSYITPLKNNFKADQSATKDSTVNTNYFTKQTFDLFKEVNDGKVLGFNDPSDFRSGKFRNTIGSTFNATISSKVDFNKFFENFKASLGSGFER.

Positions 151–201 (IKAPTNNSQSGDGNGGTNNDNLLGTFDIREKSNGKKGESNGKQGNGQDKKT) are disordered. Over residues 155-174 (TNNSQSGDGNGGTNNDNLLG) the composition is skewed to low complexity. A compositionally biased stretch (basic and acidic residues) spans 177–189 (DIREKSNGKKGES).

It belongs to the MG185/MG260 family.

This is an uncharacterized protein from Mycoplasma pneumoniae (strain ATCC 29342 / M129 / Subtype 1) (Mycoplasmoides pneumoniae).